A 209-amino-acid polypeptide reads, in one-letter code: MTFNIINLETWDRKEYFNHYFNQQTTYSVTKELDITLLKSMIKNKGYELYPALIHAIVSVINRNKVFRTGINSEGNLGYWDKLEPLYTVFNKETENFSNIWTESNASFTLFYNSYKNDLIKYKDKNEMFPKKPIPENTVPISMIPWIDFSSFNLNIGNNSRFLLPIITIGKFYSKDDKIYLPFPLQVHHAVCDGYHVSLFMNEFQNIIR.

Catalysis depends on His189, which acts as the Proton acceptor.

This sequence belongs to the chloramphenicol acetyltransferase family. In terms of assembly, homotrimer.

It carries out the reaction chloramphenicol + acetyl-CoA = chloramphenicol 3-acetate + CoA. Functionally, this enzyme is an effector of chloramphenicol resistance in bacteria. In Staphylococcus aureus, this protein is Chloramphenicol acetyltransferase.